Consider the following 446-residue polypeptide: Histidine--tRNA ligase (446 aa).

This sequence belongs to the class-II aminoacyl-tRNA synthetase family. In terms of assembly, homodimer.

It is found in the cytoplasm. The catalysed reaction is tRNA(His) + L-histidine + ATP = L-histidyl-tRNA(His) + AMP + diphosphate + H(+). The sequence is that of Histidine--tRNA ligase from Burkholderia pseudomallei (strain 1710b).